Consider the following 261-residue polypeptide: Triosephosphate isomerase (261 aa).

10–12 (NWK) is a binding site for substrate. His-100 serves as the catalytic Electrophile. Glu-172 (proton acceptor) is an active-site residue. Substrate is bound by residues Gly-178, Ser-218, and 239-240 (GG).

This sequence belongs to the triosephosphate isomerase family. As to quaternary structure, homodimer.

Its subcellular location is the cytoplasm. The catalysed reaction is D-glyceraldehyde 3-phosphate = dihydroxyacetone phosphate. Its pathway is carbohydrate biosynthesis; gluconeogenesis. The protein operates within carbohydrate degradation; glycolysis; D-glyceraldehyde 3-phosphate from glycerone phosphate: step 1/1. In terms of biological role, involved in the gluconeogenesis. Catalyzes stereospecifically the conversion of dihydroxyacetone phosphate (DHAP) to D-glyceraldehyde-3-phosphate (G3P). The sequence is that of Triosephosphate isomerase from Mycobacterium leprae (strain TN).